A 229-amino-acid polypeptide reads, in one-letter code: Deoxyribose-phosphate aldolase (229 aa).

Residue Asp96 is the Proton donor/acceptor of the active site. Lys166 serves as the catalytic Schiff-base intermediate with acetaldehyde. Catalysis depends on Lys195, which acts as the Proton donor/acceptor.

Belongs to the DeoC/FbaB aldolase family. DeoC type 1 subfamily.

It localises to the cytoplasm. It carries out the reaction 2-deoxy-D-ribose 5-phosphate = D-glyceraldehyde 3-phosphate + acetaldehyde. It functions in the pathway carbohydrate degradation; 2-deoxy-D-ribose 1-phosphate degradation; D-glyceraldehyde 3-phosphate and acetaldehyde from 2-deoxy-alpha-D-ribose 1-phosphate: step 2/2. In terms of biological role, catalyzes a reversible aldol reaction between acetaldehyde and D-glyceraldehyde 3-phosphate to generate 2-deoxy-D-ribose 5-phosphate. In Micrococcus luteus (strain ATCC 4698 / DSM 20030 / JCM 1464 / CCM 169 / CCUG 5858 / IAM 1056 / NBRC 3333 / NCIMB 9278 / NCTC 2665 / VKM Ac-2230) (Micrococcus lysodeikticus), this protein is Deoxyribose-phosphate aldolase.